A 306-amino-acid polypeptide reads, in one-letter code: Type 2A encapsulin shell protein SrpI (306 aa).

The protein belongs to the encapsulin family. Family 2A subfamily. As to quaternary structure, the 24.5 nm encapsulin nanocompartment is formed by 60 subunits; monomers form pentamers which assemble to form shells. There are 12 positively charged pores where the pentamers meet with a minimal pore diameter of 3.7 Angstroms as well 3-fold axis channels and dimer channels.

The protein localises to the encapsulin nanocompartment. Shell component of a type 2A encapsulin nanocompartment. Expression in E.coli generates nanocompartments with an average diameter of 25 nm. They can be disassembled by treatment with 6M guanidine hydrochloride and reassembled with cargo. The nanocompartment is probably involved in sulfur metabolism. Probably allows passage of cysteine into its interior; during growth in light the physiological pH is 8-8.4, about 30-54% of free cysteine (charge -1) would be able to pass through the shell. This chain is Type 2A encapsulin shell protein SrpI, found in Synechococcus elongatus (strain ATCC 33912 / PCC 7942 / FACHB-805) (Anacystis nidulans R2).